The following is a 315-amino-acid chain: Ribosomal RNA small subunit methyltransferase H (315 aa).

Residues 35–37 (GGH), aspartate 55, phenylalanine 79, aspartate 101, and glutamine 108 contribute to the S-adenosyl-L-methionine site.

It belongs to the methyltransferase superfamily. RsmH family.

It is found in the cytoplasm. The catalysed reaction is cytidine(1402) in 16S rRNA + S-adenosyl-L-methionine = N(4)-methylcytidine(1402) in 16S rRNA + S-adenosyl-L-homocysteine + H(+). In terms of biological role, specifically methylates the N4 position of cytidine in position 1402 (C1402) of 16S rRNA. This Photobacterium profundum (strain SS9) protein is Ribosomal RNA small subunit methyltransferase H.